We begin with the raw amino-acid sequence, 335 residues long: 2-acylglycerol O-acyltransferase 2 (335 aa).

The next 2 membrane-spanning stretches (helical) occupy residues 24 to 44 (WAVSFLAMAQCCIALYILLLF) and 104 to 124 (YIMGFHPHGVLVVGAFGNFCT). N-linked (GlcNAc...) asparagine glycosylation occurs at N206.

Belongs to the diacylglycerol acyltransferase family.

It localises to the endoplasmic reticulum membrane. Its subcellular location is the cytoplasm. The protein resides in the perinuclear region. It catalyses the reaction a 2-acylglycerol + an acyl-CoA = a 1,2-diacylglycerol + CoA. It carries out the reaction a 2-acylglycerol + an acyl-CoA = a 1,2-diacyl-sn-glycerol + CoA. The catalysed reaction is a 2-acylglycerol + an acyl-CoA = a 2,3-diacyl-sn-glycerol + CoA. The enzyme catalyses a 1-acylglycerol + an acyl-CoA = a 1,2-diacylglycerol + CoA. It catalyses the reaction a 1-acylglycerol + an acyl-CoA = a 1,3-diacylglycerol + CoA. It carries out the reaction 1-O-alkylglycerol + an acyl-CoA = 1-O-alkyl-3-acylglycerol + CoA. The catalysed reaction is an acyl-CoA + a 1,2-diacyl-sn-glycerol = a triacyl-sn-glycerol + CoA. It participates in glycerolipid metabolism; triacylglycerol biosynthesis. In terms of biological role, involved in glycerolipid synthesis and lipid metabolism. Catalyzes the formation of diacylglycerol, the precursor of triacylglycerol, by transferring the acyl chain of a fatty acyl-CoA to a monoacylglycerol. Plays a central role in absorption of dietary fat in the small intestine by catalyzing the resynthesis of triacylglycerol in enterocytes. Has a preference toward monoacylglycerols containing unsaturated fatty acids in an order of C18:3 &gt; C18:2 &gt; C18:1 &gt; C18:0 at sn-2. Able to use 1-monoalkylglycerol (1-MAkG, 1-O-alkylglycerol) as an acyl acceptor for the synthesis of monoalkyl-monoacylglycerol (MAMAG, 1-O-alkyl-3-acylglycerol or 1-O-alkyl-2-acylglycerol) and subsequently, with lower efficiency, may add another acyl chain producing monoalkyl-diacylglycerol (MADAG, 1-O-alkyl-2,3-diacylglycerol). Possesses weak but significant activity with diacylglycerol as substrate, producing triacylglycerol (triacyl-sn-glycerol). This chain is 2-acylglycerol O-acyltransferase 2 (mogat2), found in Xenopus tropicalis (Western clawed frog).